The primary structure comprises 313 residues: Jacalin-related lectin 8 (313 aa).

The first 23 residues, 1-23, serve as a signal peptide directing secretion; that stretch reads MFIIYLFIFLSSAIIDSNGVAMA. 2 consecutive Jacalin-type lectin domains span residues 24-163 and 165-309; these read QKIE…YVKT and PTKS…YFSP.

Belongs to the jacalin lectin family.

This chain is Jacalin-related lectin 8 (JAL8), found in Arabidopsis thaliana (Mouse-ear cress).